A 720-amino-acid chain; its full sequence is Glutaryl-7-aminocephalosporanic-acid acylase (720 aa).

Residues 1–29 (MLRVLHRAASALVMATVIGLAPAVAFALA) form the signal peptide. Positions 190–198 (DPPDLADQG) are cleaved as a propeptide — spacer peptide. S199 serves as the catalytic Nucleophile. Catalysis depends on residues H221 and E653.

The protein belongs to the peptidase S45 family. As to quaternary structure, heterotetramer of two alpha and two beta subunits processed from the same precursor.

It localises to the periplasm. It carries out the reaction (7R)-7-(4-carboxybutanamido)cephalosporanate + H2O = (7R)-7-aminocephalosporanate + glutarate. Its function is as follows. Catalyzes the deacylation of 7 beta-(4-carboxybutanamido)cephalosporanic acid (glutaryl-7-aminocephalosporanic acid or GL-7-ACA) to 7-aminocephalosporanic acid (7-ACA). The polypeptide is Glutaryl-7-aminocephalosporanic-acid acylase (Pseudomonas sp. (strain SY-77)).